Consider the following 227-residue polypeptide: Lysosomal-associated transmembrane protein 4B (227 aa).

A run of 4 helical transmembrane segments spans residues 26-46 (ILLG…LLSA), 72-92 (MCIA…ATYG), 100-120 (WIIP…LVAI), and 153-173 (CLVL…GYLI). The interval 205–222 (PPYDDATAVPSTAKEPPP) is required for NEDD4 interaction.

It belongs to the LAPTM4/LAPTM5 transporter family. As to quaternary structure, homooligomer; upon reaching the lysosomes. Interacts with MCOLN1. Interacts with NEDD4; may play a role in the lysosomal sorting of LAPTM4B; enhances HGS association with NEDD4; mediates inhibition of EGFR degradation. Interacts with PIP5K1C; promotes SNX5 association with LAPTM4B; kinase activity of PIP5K1C is required; interaction is regulated by phosphatidylinositol 4,5-bisphosphate generated by PIP5K1C. Interacts with HGS; promotes HGS ubiquitination. Interacts with SNX5. Interacts with SLC3A2 and SLC7A5; recruits SLC3A2 and SLC7A5 to lysosomes to promote leucine uptake into these organelles and is required for mTORC1 activation. Interacts with LRRC32; decreases TGFB1 production in regulatory T cells. Interacts with BECN1; competes with EGFR for LAPTM4B binding; regulates EGFR activity. Interacts with EGFR; positively correlates with EGFR activation. In terms of processing, undergoes proteolytic cleavage following delivery to the lysosomes. Post-translationally, ubiquitinated by NEDD4.

The protein localises to the endomembrane system. Its subcellular location is the late endosome membrane. It localises to the cell membrane. It is found in the cell projection. The protein resides in the lysosome membrane. The protein localises to the endosome membrane. Its subcellular location is the endosome. It localises to the multivesicular body membrane. It is found in the multivesicular body lumen. Functionally, required for optimal lysosomal function. Blocks EGF-stimulated EGFR intraluminal sorting and degradation. Conversely by binding with the phosphatidylinositol 4,5-bisphosphate, regulates its PIP5K1C interaction, inhibits HGS ubiquitination and relieves LAPTM4B inhibition of EGFR degradation. Recruits SLC3A2 and SLC7A5 (the Leu transporter) to the lysosome, promoting entry of leucine and other essential amino acid (EAA) into the lysosome, stimulating activation of proton-transporting vacuolar (V)-ATPase protein pump (V-ATPase) and hence mTORC1 activation. Plays a role as negative regulator of TGFB1 production in regulatory T cells. Binds ceramide and facilitates its exit from late endosome in order to control cell death pathways. The protein is Lysosomal-associated transmembrane protein 4B of Mus musculus (Mouse).